Reading from the N-terminus, the 545-residue chain is CWF19-like protein 1 homolog (545 aa).

The tract at residues 306-329 (YFYDMDGGRRKRQGGDNNKRDKRP) is disordered.

The protein belongs to the CWF19 family.

This is CWF19-like protein 1 homolog from Drosophila melanogaster (Fruit fly).